Reading from the N-terminus, the 616-residue chain is FAD-linked oxidoreductase cheF (616 aa).

An FAD-binding PCMH-type domain is found at 160-344 (NQGLVSPWYV…LSMTVRVEPA (185 aa)).

The protein belongs to the oxygen-dependent FAD-linked oxidoreductase family. It depends on FAD as a cofactor.

It participates in secondary metabolite biosynthesis. In terms of biological role, FAD-linked oxidoreductase; part of the gene cluster that mediates the biosynthesis of chaetoglobosin A which has a unique inhibitory activity against actin polymerization in mammalian cells. Chaetoglobosin A and its intermediates are involved in the morphological differentiation of C.globosum. The first step of the pathway is the synthesis of prochaetoglobosin I via condensation of one acetyl-CoA, 8 malonyl-CoA, and a L-tryptophan molecule by the PKS-NRPS hybrid synthetase cheA, followed by reduction of backbone double bond to install desired geometry by the enoyl reductase cheB. Further multiple oxidation steps performed by the cytochrome P450 monooxygenases cheE and cheG, as well as by the FAD-linked oxidoreductase cheF, lead to the formation of chaetoglobosin A. Depending on the order of action of these reductases, distinct intermediates can be identified. Within the pathway, the cytochrome P450 monooxygenase cheE catalyzes a stereospecific epoxidation on prochaetoglobosin I, cytoglobosin D, and chaetoglobosin J intermediates. The FAD-linked oxidoreductase cheF performs dehydrogenation of the C-20 hydroxyl groups in the 20-dihyrochaetoglobosin A and cytoglobosin D intermediates. Finally, the cytochrome P450 monooxygenase cheG can catalyze the stereospecific dihydroxylation of prochaetoglobosin I and prochaetoglobosin IV at C-19 and C-20, respectively. The Diels-Alderase cheD may play a role in the post-PKS-NRPS biosynthetic steps catalyzing Diels-Alder cyclization. The polypeptide is FAD-linked oxidoreductase cheF (Chaetomium globosum (strain ATCC 6205 / CBS 148.51 / DSM 1962 / NBRC 6347 / NRRL 1970) (Soil fungus)).